The sequence spans 515 residues: FAD-dependent oxidoreductase domain-containing protein 1 homolog (515 aa).

The tract at residues A18 to L37 is disordered. A helical transmembrane segment spans residues V100–L116.

As to quaternary structure, associates with mitochondrial complex I assembly intermediates during its biogenesis. It depends on FAD as a cofactor.

Its subcellular location is the mitochondrion inner membrane. Functionally, involved in the assembly of the mitochondrial membrane respiratory chain NADH dehydrogenase (Complex I). This Drosophila melanogaster (Fruit fly) protein is FAD-dependent oxidoreductase domain-containing protein 1 homolog.